The following is a 76-amino-acid chain: UPF0291 protein GK1331 (76 aa).

The interval 57–76 (PSGNDVTPKKLKESQRRRFH) is disordered. Residues 63 to 76 (TPKKLKESQRRRFH) are compositionally biased toward basic and acidic residues.

It belongs to the UPF0291 family.

It localises to the cytoplasm. This Geobacillus kaustophilus (strain HTA426) protein is UPF0291 protein GK1331.